A 69-amino-acid chain; its full sequence is uncharacterized protein (69 aa).

Topologically, residues 1–15 (MLLYIVIIVACIISK) are cytoplasmic. Residues 16 to 36 (LVPNEYWAIHLFFIIMIFMVY) form a helical membrane-spanning segment. Topologically, residues 37–69 (MYEKLDIHQKYQFWNYTMSGLSGHNVQITCKCY) are extracellular. Asparagine 51 is a glycosylation site (N-linked (GlcNAc...) asparagine; by host).

It belongs to the asfivirus X69R family.

It localises to the host membrane. This is an uncharacterized protein from Ornithodoros (relapsing fever ticks).